Consider the following 434-residue polypeptide: MAQFDLTRINCQYLDRHLTFPLLEFLCGKEIYNQQDLLEYILDTVNKTNMIDYTMDTRKRLNLSQDMPDELVQRKSDVLATLKQLQNEVAPIMKATDILKNGESMKDSKTFVNALQKDYNFKVEHLESAYKLAKYLYECGNYQESTSYLYFCLIVMSPNDKNYLNVLWGKLAAEILTLNWNTALEDLTRLRDYIDSANFSTIQALQQRTWLIHWSVLVFFNHPKGRDLIIEMFLYKPLYLNAIQTMCPHIMRYLATAVVINRTRRNALKDLIKVIQQESYTYRDPITEFLECLYVNFDFEGARLKLHECQTVILNDFFIVACLNEFVEDARLMIFETFCRIHQCITISMLADKLNMKPNEAECWIVNLIRNARLNAKIDSKLGHVVMGTQPLSPYQQLVEKIDSLSMRSEHLAGLIERKSKQKNQESADSWKYY.

In terms of domain architecture, PCI spans 219–392 (FFNHPKGRDL…GHVVMGTQPL (174 aa)).

Belongs to the eIF-3 subunit E family. As to quaternary structure, component of the eukaryotic translation initiation factor 3 (eIF-3) complex. The eIF-3 complex interacts with pix. Interacts with mxt.

It is found in the cytoplasm. Its function is as follows. Component of the eukaryotic translation initiation factor 3 (eIF-3) complex, which is involved in protein synthesis of a specialized repertoire of mRNAs and, together with other initiation factors, stimulates binding of mRNA and methionyl-tRNAi to the 40S ribosome. The eIF-3 complex specifically targets and initiates translation of a subset of mRNAs involved in cell proliferation. In Drosophila grimshawi (Hawaiian fruit fly), this protein is Eukaryotic translation initiation factor 3 subunit E (eIF3-S6).